The following is a 180-amino-acid chain: ATP-dependent protease subunit HslV (180 aa).

T5 is a catalytic residue. The Na(+) site is built by G165, C168, and T171.

Belongs to the peptidase T1B family. HslV subfamily. A double ring-shaped homohexamer of HslV is capped on each side by a ring-shaped HslU homohexamer. The assembly of the HslU/HslV complex is dependent on binding of ATP.

The protein resides in the cytoplasm. It catalyses the reaction ATP-dependent cleavage of peptide bonds with broad specificity.. Its activity is regulated as follows. Allosterically activated by HslU binding. Functionally, protease subunit of a proteasome-like degradation complex believed to be a general protein degrading machinery. The polypeptide is ATP-dependent protease subunit HslV (Helicobacter pylori (strain G27)).